The primary structure comprises 158 residues: Transcription elongation factor GreB (158 aa).

The stretch at 53-75 (KRRLREIDRRVRFLTKRLEVLQI) forms a coiled coil.

The protein belongs to the GreA/GreB family. GreB subfamily.

Necessary for efficient RNA polymerase transcription elongation past template-encoded arresting sites. The arresting sites in DNA have the property of trapping a certain fraction of elongating RNA polymerases that pass through, resulting in locked ternary complexes. Cleavage of the nascent transcript by cleavage factors such as GreA or GreB allows the resumption of elongation from the new 3'terminus. GreB releases sequences of up to 9 nucleotides in length. The sequence is that of Transcription elongation factor GreB from Haemophilus influenzae (strain ATCC 51907 / DSM 11121 / KW20 / Rd).